Here is a 337-residue protein sequence, read N- to C-terminus: Glyceraldehyde-3-phosphate dehydrogenase, cytosolic (337 aa).

Residues 13–14 (RI), aspartate 35, and arginine 82 contribute to the NAD(+) site. D-glyceraldehyde 3-phosphate is bound by residues 153-155 (SCT), threonine 184, 213-214 (TG), and arginine 236. The active-site Nucleophile is the cysteine 154. NAD(+) is bound at residue asparagine 318.

It belongs to the glyceraldehyde-3-phosphate dehydrogenase family. As to quaternary structure, homotetramer.

It localises to the cytoplasm. The catalysed reaction is D-glyceraldehyde 3-phosphate + phosphate + NAD(+) = (2R)-3-phospho-glyceroyl phosphate + NADH + H(+). It functions in the pathway carbohydrate degradation; glycolysis; pyruvate from D-glyceraldehyde 3-phosphate: step 1/5. In terms of biological role, key enzyme in glycolysis that catalyzes the first step of the pathway by converting D-glyceraldehyde 3-phosphate (G3P) into 3-phospho-D-glyceroyl phosphate. Essential for the maintenance of cellular ATP levels and carbohydrate metabolism. This Craterostigma plantagineum (Blue gem) protein is Glyceraldehyde-3-phosphate dehydrogenase, cytosolic (GAPC).